We begin with the raw amino-acid sequence, 216 residues long: Protein Syd (216 aa).

It belongs to the Syd family.

It localises to the cell inner membrane. Its function is as follows. Interacts with the SecY protein in vivo. May bind preferentially to an uncomplexed state of SecY, thus functioning either as a chelating agent for excess SecY in the cell or as a regulatory factor that negatively controls the translocase function. The polypeptide is Protein Syd (Shewanella putrefaciens (strain CN-32 / ATCC BAA-453)).